The chain runs to 285 residues: NAD kinase (285 aa).

The Proton acceptor role is filled by Asp68. Residues 68–69 (DG), 142–143 (ND), Arg153, Arg170, Asp172, and Gln242 contribute to the NAD(+) site.

This sequence belongs to the NAD kinase family. A divalent metal cation serves as cofactor.

The protein localises to the cytoplasm. The enzyme catalyses NAD(+) + ATP = ADP + NADP(+) + H(+). Involved in the regulation of the intracellular balance of NAD and NADP, and is a key enzyme in the biosynthesis of NADP. Catalyzes specifically the phosphorylation on 2'-hydroxyl of the adenosine moiety of NAD to yield NADP. The sequence is that of NAD kinase from Acidobacterium capsulatum (strain ATCC 51196 / DSM 11244 / BCRC 80197 / JCM 7670 / NBRC 15755 / NCIMB 13165 / 161).